The following is a 199-amino-acid chain: Melanocortin-2 receptor accessory protein 2B (199 aa).

A glycan (N-linked (GlcNAc...) asparagine) is linked at N6. A helical transmembrane segment spans residues 39-59 (IVIGFWVGLAVFVIFMFFVLT).

Belongs to the MRAP family. As to quaternary structure, interacts with mc4r. In terms of tissue distribution, expressed in adult brain.

It is found in the cell membrane. The protein resides in the endoplasmic reticulum membrane. Its function is as follows. Activator of melanocortin receptor 4 (mc4r), a receptor involved in energy homeostasis. Plays a role after larval development in the control of energy homeostasis and body weight regulation by increasing ligand-sensitivity of mc4r and mc4r-mediated generation of cAMP once the zebrafish begins feeding, increasing the capacity for regulated feeding and growth. In Danio rerio (Zebrafish), this protein is Melanocortin-2 receptor accessory protein 2B (mrap2b).